The primary structure comprises 180 residues: ATP synthase subunit delta (180 aa).

It belongs to the ATPase delta chain family. F-type ATPases have 2 components, F(1) - the catalytic core - and F(0) - the membrane proton channel. F(1) has five subunits: alpha(3), beta(3), gamma(1), delta(1), epsilon(1). F(0) has three main subunits: a(1), b(2) and c(10-14). The alpha and beta chains form an alternating ring which encloses part of the gamma chain. F(1) is attached to F(0) by a central stalk formed by the gamma and epsilon chains, while a peripheral stalk is formed by the delta and b chains.

Its subcellular location is the cell membrane. Functionally, f(1)F(0) ATP synthase produces ATP from ADP in the presence of a proton or sodium gradient. F-type ATPases consist of two structural domains, F(1) containing the extramembraneous catalytic core and F(0) containing the membrane proton channel, linked together by a central stalk and a peripheral stalk. During catalysis, ATP synthesis in the catalytic domain of F(1) is coupled via a rotary mechanism of the central stalk subunits to proton translocation. This protein is part of the stalk that links CF(0) to CF(1). It either transmits conformational changes from CF(0) to CF(1) or is implicated in proton conduction. The polypeptide is ATP synthase subunit delta (Enterococcus faecalis (strain ATCC 700802 / V583)).